The following is a 63-amino-acid chain: Adipokinetic prohormone type 1 (63 aa).

An N-terminal signal peptide occupies residues 1–22 (MVQRCALVVLLVVAVAAALCSA). The residue at position 23 (Gln23) is a Pyrrolidone carboxylic acid. Thr32 carries the threonine amide modification.

Belongs to the AKH/HRTH/RPCH family.

It is found in the secreted. Functionally, this hormone, released from cells in the corpora cardiaca, causes release of diglycerides from the fat body and stimulation of muscles to use these diglycerides as an energy source during energy-demanding processes. In Locusta migratoria (Migratory locust), this protein is Adipokinetic prohormone type 1.